Consider the following 130-residue polypeptide: Glycine cleavage system H protein (130 aa).

The Lipoyl-binding domain occupies 24 to 106; that stretch reads TVTIGITDHA…YDEGWFFKVK (83 aa). Lys-65 carries the N6-lipoyllysine modification.

This sequence belongs to the GcvH family. In terms of assembly, the glycine cleavage system is composed of four proteins: P, T, L and H. Requires (R)-lipoate as cofactor.

In terms of biological role, the glycine cleavage system catalyzes the degradation of glycine. The H protein shuttles the methylamine group of glycine from the P protein to the T protein. The sequence is that of Glycine cleavage system H protein from Teredinibacter turnerae (strain ATCC 39867 / T7901).